A 310-amino-acid chain; its full sequence is MPLRLVFMGTPEFAVPTLLALAAHGHDIAAVYTREPKPAGRGMKLQETPVALAAHRLQAPVLTPKTLRTDEALANFRAHEADAAVVVAYGMILPQAILDAPELGCYNLHGSLLPRWRGAAPLNRAIMAGDAETGVMVMKMDAGLDTGDVAMAERIAITDAMTVTDVHDQLARLGADLMVRAMAALERGGLQLTKQSEDGVTYAAKIDKAEAKIDFAKPAWAVLRHIHGLSPFPGAWCELPIEGQPVRIKVLRCAIADGRGEPGEVIDDHLTIACGDGAIRVSQLQRAGKQPMTAEEFLRGTPIAKGVRVG.

Residue 111-114 (SLLP) participates in (6S)-5,6,7,8-tetrahydrofolate binding.

It belongs to the Fmt family.

It carries out the reaction L-methionyl-tRNA(fMet) + (6R)-10-formyltetrahydrofolate = N-formyl-L-methionyl-tRNA(fMet) + (6S)-5,6,7,8-tetrahydrofolate + H(+). In terms of biological role, attaches a formyl group to the free amino group of methionyl-tRNA(fMet). The formyl group appears to play a dual role in the initiator identity of N-formylmethionyl-tRNA by promoting its recognition by IF2 and preventing the misappropriation of this tRNA by the elongation apparatus. In Rhodopseudomonas palustris (strain TIE-1), this protein is Methionyl-tRNA formyltransferase.